The primary structure comprises 658 residues: Threonine--tRNA ligase (658 aa).

The 63-residue stretch at 1–63 folds into the TGS domain; the sequence is MDQITITFPD…DDNASIDFVA (63 aa). A catalytic region spans residues 245 to 548; it reads DHRKLGRELD…LIEHYAGNFP (304 aa). The Zn(2+) site is built by Cys-341, His-392, and His-525.

The protein belongs to the class-II aminoacyl-tRNA synthetase family. As to quaternary structure, homodimer. Zn(2+) serves as cofactor.

The protein localises to the cytoplasm. The enzyme catalyses tRNA(Thr) + L-threonine + ATP = L-threonyl-tRNA(Thr) + AMP + diphosphate + H(+). Its function is as follows. Catalyzes the attachment of threonine to tRNA(Thr) in a two-step reaction: L-threonine is first activated by ATP to form Thr-AMP and then transferred to the acceptor end of tRNA(Thr). Also edits incorrectly charged L-seryl-tRNA(Thr). The chain is Threonine--tRNA ligase from Rhodopseudomonas palustris (strain ATCC BAA-98 / CGA009).